We begin with the raw amino-acid sequence, 245 residues long: tRNA pseudouridine synthase A (245 aa).

Asp52 functions as the Nucleophile in the catalytic mechanism. A substrate-binding site is contributed by Tyr111.

This sequence belongs to the tRNA pseudouridine synthase TruA family. In terms of assembly, homodimer.

The catalysed reaction is uridine(38/39/40) in tRNA = pseudouridine(38/39/40) in tRNA. Its function is as follows. Formation of pseudouridine at positions 38, 39 and 40 in the anticodon stem and loop of transfer RNAs. This chain is tRNA pseudouridine synthase A, found in Nitrobacter hamburgensis (strain DSM 10229 / NCIMB 13809 / X14).